Reading from the N-terminus, the 107-residue chain is Endonuclease ALBA3 (107 aa).

N6-acetyllysine is present on residues Lys-23 and Lys-32.

The protein belongs to the histone-like Alba family. In terms of assembly, homodimer. Interacts (acetylated and unacetylated) with Sir2A. The cofactor is a divalent metal cation. Acetylated. Exists in both acetylated and unacetylated forms but predominantly in an acetylated form. Deacetylated by Sir2A.

Its subcellular location is the nucleus. The protein resides in the chromosome. The protein localises to the telomere. It is found in the cytoplasm. With respect to regulation, mild acetylation lowers protein interaction with DNA and high acetylation abolishes DNA-binding activity. DNA binding and endonuclease activity is modulated via deacetylation of Lys-23 by Sir2A. Inhibited in the presence of EDTA and EGTA. Functionally, possesses DNA-binding and endonuclease activities. Binds DNA cooperatively in sequence-independent manner at the DNA minor groove. Exhibits apurinic/apyrimidinic site-driven endonuclease activity. Binds RNA; shows high affinity for poly(A) and a lower affinity for poly(U) templates. In vitro, prevents transcription after DNA binding. Associates with the telomeric region, the subtelomeric TARE6 repeat sequence and the var gene promoters. In Plasmodium falciparum (isolate 3D7), this protein is Endonuclease ALBA3.